Here is a 287-residue protein sequence, read N- to C-terminus: Neuferricin homolog (287 aa).

A signal peptide spans 1-22 (MFGLLRHLFKFQFLFVVAAVLG). Residues 61–146 (GTLFTPAELA…KPDDLIGLAG (86 aa)) form the Cytochrome b5 heme-binding domain. Residues 175 to 204 (YHHKFLELLEQARDAKRQVEELRARYPGCN) are a coiled coil.

It belongs to the cytochrome b5 family. MAPR subfamily.

It is found in the secreted. Its function is as follows. Heme-binding protein. In Drosophila melanogaster (Fruit fly), this protein is Neuferricin homolog.